A 272-amino-acid polypeptide reads, in one-letter code: Expansin-B16 (272 aa).

The N-terminal stretch at 1–25 is a signal peptide; that stretch reads MAAFSSSSSAPMLIRSVLFVSLLSA. The Expansin-like EG45 domain occupies 63–173; the sequence is GGACGYGTLV…RRTACKYGGK (111 aa). Disulfide bonds link Cys66/Cys95, Cys98/Cys168, and Cys103/Cys109. Positions 186–267 constitute an Expansin-like CBD domain; it reads FWLSLLVEFE…NWTPKATYTS (82 aa).

The protein belongs to the expansin family. Expansin B subfamily.

It is found in the secreted. Its subcellular location is the cell wall. The protein resides in the membrane. In terms of biological role, may cause loosening and extension of plant cell walls by disrupting non-covalent bonding between cellulose microfibrils and matrix glucans. No enzymatic activity has been found. May be required for rapid internodal elongation in deepwater rice during submergence. This is Expansin-B16 (EXPB16) from Oryza sativa subsp. japonica (Rice).